The sequence spans 300 residues: uncharacterized protein (300 aa).

Residues 67–179 are a coiled coil; the sequence is LAFEELEKEK…IAKANELKDS (113 aa). Positions 203 to 285 are enriched in low complexity; it reads STTASLSQSE…PSSQSTYQQQ (83 aa). Positions 203–300 are disordered; the sequence is STTASLSQSE…KGFFARLFNL (98 aa).

This is an uncharacterized protein from Staphylococcus epidermidis (strain ATCC 12228 / FDA PCI 1200).